Consider the following 276-residue polypeptide: Octopine-binding periplasmic protein (276 aa).

The N-terminal stretch at 1 to 20 (MKLKTILCAALLLVAGQAAA) is a signal peptide. A disulfide bridge connects residues cysteine 57 and cysteine 64.

It belongs to the bacterial solute-binding protein 3 family.

Its subcellular location is the periplasm. Component of the octopine active transport system probably consisting of four subunits: Q, M, P and T. The chain is Octopine-binding periplasmic protein (occT) from Agrobacterium tumefaciens (strain Ach5).